Here is a 281-residue protein sequence, read N- to C-terminus: Cardosin-F (281 aa).

Positions 18–278 (YYGEIGIGTP…DYGNLLVGFA (261 aa)) constitute a Peptidase A1 domain. Aspartate 36 is an active-site residue. A disulfide bridge connects residues cysteine 181 and cysteine 185. Residue aspartate 190 is part of the active site. A glycan (N-linked (GlcNAc...) asparagine) is linked at asparagine 213.

Belongs to the peptidase A1 family. Heterodimer of a light chain and a heavy chain. An intermediate form is produced first, and undergoes proteolytic processing to remove the internal plant-specific insert (PSI) and the propeptide. Post-translationally, N-glycosylated. Pistils.

The protein localises to the microsome membrane. The protein resides in the protein storage vacuole. It is found in the secreted. Its subcellular location is the cell wall. It localises to the extracellular space. The protein localises to the extracellular matrix. With respect to regulation, inhibited by pepstatin. Functionally, aspartic protease with a high preference for bonds between hydrophobic residues. The polypeptide is Cardosin-F (Cynara cardunculus (Cardoon)).